Here is a 228-residue protein sequence, read N- to C-terminus: Putative L-ribulose-5-phosphate 4-epimerase UlaF (228 aa).

Residues 26 to 27 (GN), 43 to 44 (SG), and 72 to 73 (SS) each bind substrate. Zn(2+)-binding residues include Asp74, His93, and His95. Asp118 (proton donor/acceptor) is an active-site residue. His167 provides a ligand contact to Zn(2+). Residue Tyr225 is the Proton donor/acceptor of the active site.

The protein belongs to the aldolase class II family. AraD/FucA subfamily. Requires Zn(2+) as cofactor.

The catalysed reaction is L-ribulose 5-phosphate = D-xylulose 5-phosphate. It functions in the pathway cofactor degradation; L-ascorbate degradation; D-xylulose 5-phosphate from L-ascorbate: step 4/4. Its function is as follows. Catalyzes the isomerization of L-ribulose 5-phosphate to D-xylulose 5-phosphate. Is involved in the anaerobic L-ascorbate utilization. The polypeptide is Putative L-ribulose-5-phosphate 4-epimerase UlaF (Shigella boydii serotype 4 (strain Sb227)).